A 311-amino-acid chain; its full sequence is Olfactory receptor 52J3 (311 aa).

Over 1 to 27 (MFYHNKSIFHPVTFFLIGIPGLEDFHM) the chain is Extracellular. The N-linked (GlcNAc...) asparagine glycan is linked to Asn-5. Residues 28-48 (WISGPFCSVYLVALLGNATIL) form a helical membrane-spanning segment. Over 49–56 (LVIKVEQT) the chain is Cytoplasmic. A helical membrane pass occupies residues 57-77 (LREPMFYFLAILSTIDLALST). At 78–101 (TSVPRMLGIFWFDAHEINYGACVA) the chain is on the extracellular side. Cysteines 99 and 191 form a disulfide. The chain crosses the membrane as a helical span at residues 102–122 (QMFLIHAFTGMEAEVLLAMAF). Residues 123-141 (DRYVAVCAPLHYATILTSQ) lie on the Cytoplasmic side of the membrane. A helical transmembrane segment spans residues 142–162 (VLVGISMCIVIRPVLLTLPMV). The Extracellular portion of the chain corresponds to 163-198 (YLIYRLPFCQAHIIAHSYCEHMGIAKLSCGNIRING). A helical membrane pass occupies residues 199 to 218 (IYGLFVVSFFVLNLVLIGIS). The Cytoplasmic segment spans residues 219–238 (YVYILRAVFRLPSHDAQLKA). A helical membrane pass occupies residues 239 to 259 (LSTCGAHVGVICVFYIPSVFS). The Extracellular portion of the chain corresponds to 260–274 (FLTHRFGHQIPGYIH). Residues 275–295 (ILVANLYLIIPPSLNPIIYGV) traverse the membrane as a helical segment. The Cytoplasmic segment spans residues 296–311 (RTKQIRERVLYVFTKK).

This sequence belongs to the G-protein coupled receptor 1 family.

Its subcellular location is the cell membrane. In terms of biological role, odorant receptor. In Homo sapiens (Human), this protein is Olfactory receptor 52J3 (OR52J3).